A 321-amino-acid chain; its full sequence is Acetyl-coenzyme A carboxylase carboxyl transferase subunit alpha (321 aa).

The region spanning 39–293 is the CoA carboxyltransferase C-terminal domain; the sequence is RLQQKSQNLA…RRALGDALRQ (255 aa).

This sequence belongs to the AccA family. In terms of assembly, acetyl-CoA carboxylase is a heterohexamer composed of biotin carboxyl carrier protein (AccB), biotin carboxylase (AccC) and two subunits each of ACCase subunit alpha (AccA) and ACCase subunit beta (AccD).

Its subcellular location is the cytoplasm. The catalysed reaction is N(6)-carboxybiotinyl-L-lysyl-[protein] + acetyl-CoA = N(6)-biotinyl-L-lysyl-[protein] + malonyl-CoA. It participates in lipid metabolism; malonyl-CoA biosynthesis; malonyl-CoA from acetyl-CoA: step 1/1. Its function is as follows. Component of the acetyl coenzyme A carboxylase (ACC) complex. First, biotin carboxylase catalyzes the carboxylation of biotin on its carrier protein (BCCP) and then the CO(2) group is transferred by the carboxyltransferase to acetyl-CoA to form malonyl-CoA. The sequence is that of Acetyl-coenzyme A carboxylase carboxyl transferase subunit alpha from Bordetella bronchiseptica (strain ATCC BAA-588 / NCTC 13252 / RB50) (Alcaligenes bronchisepticus).